The chain runs to 379 residues: Dual-specificity RNA methyltransferase RlmN (379 aa).

Glu95 functions as the Proton acceptor in the catalytic mechanism. The 245-residue stretch at 101–345 (EETRGTLCVS…TTVRKTRGDD (245 aa)) folds into the Radical SAM core domain. The cysteines at positions 108 and 350 are disulfide-linked. [4Fe-4S] cluster is bound by residues Cys115, Cys119, and Cys122. Residues 176–177 (GE), Ser208, 230–232 (SLH), and Asn307 each bind S-adenosyl-L-methionine. Catalysis depends on Cys350, which acts as the S-methylcysteine intermediate.

The protein belongs to the radical SAM superfamily. RlmN family. The cofactor is [4Fe-4S] cluster.

Its subcellular location is the cytoplasm. The enzyme catalyses adenosine(2503) in 23S rRNA + 2 reduced [2Fe-2S]-[ferredoxin] + 2 S-adenosyl-L-methionine = 2-methyladenosine(2503) in 23S rRNA + 5'-deoxyadenosine + L-methionine + 2 oxidized [2Fe-2S]-[ferredoxin] + S-adenosyl-L-homocysteine. It carries out the reaction adenosine(37) in tRNA + 2 reduced [2Fe-2S]-[ferredoxin] + 2 S-adenosyl-L-methionine = 2-methyladenosine(37) in tRNA + 5'-deoxyadenosine + L-methionine + 2 oxidized [2Fe-2S]-[ferredoxin] + S-adenosyl-L-homocysteine. Its function is as follows. Specifically methylates position 2 of adenine 2503 in 23S rRNA and position 2 of adenine 37 in tRNAs. m2A2503 modification seems to play a crucial role in the proofreading step occurring at the peptidyl transferase center and thus would serve to optimize ribosomal fidelity. The protein is Dual-specificity RNA methyltransferase RlmN of Burkholderia cenocepacia (strain HI2424).